A 550-amino-acid polypeptide reads, in one-letter code: Eukaryotic translation initiation factor 3 subunit D-2 (550 aa).

Residues 97-126 form a disordered region; the sequence is RGRGFRPSVHNNPRNVRNQRGRKGNAMGNI. Residues 287-301 are RNA gate; sequence KFDMLTVNETSQEPP. The tract at residues 530-550 is disordered; it reads SDVSEEEESSEDKPFGLSMNN.

This sequence belongs to the eIF-3 subunit D family. Component of the eukaryotic translation initiation factor 3 (eIF-3) complex. The eIF-3 complex interacts with pix.

The protein localises to the cytoplasm. Its function is as follows. mRNA cap-binding component of the eukaryotic translation initiation factor 3 (eIF-3) complex, which is involved in protein synthesis of a specialized repertoire of mRNAs and, together with other initiation factors, stimulates binding of mRNA and methionyl-tRNAi to the 40S ribosome. The eIF-3 complex specifically targets and initiates translation of a subset of mRNAs involved in cell proliferation. In the eIF-3 complex, eif3d specifically recognizes and binds the 7-methylguanosine cap of a subset of mRNAs. The sequence is that of Eukaryotic translation initiation factor 3 subunit D-2 from Drosophila willistoni (Fruit fly).